The sequence spans 698 residues: Interleukin-17 receptor C (698 aa).

Residues 1–21 (MPVSWFLLSLALGRNPVVVSL) form the signal peptide. The Extracellular segment spans residues 22 to 464 (ERLMEPQDTA…CPMDKYIHRR (443 aa)). A glycan (N-linked (GlcNAc...) asparagine) is linked at asparagine 182. An intrachain disulfide couples cysteine 190 to cysteine 202. N-linked (GlcNAc...) asparagine glycans are attached at residues asparagine 209, asparagine 249, asparagine 255, and asparagine 259. 6 disulfide bridges follow: cysteine 266–cysteine 316, cysteine 268–cysteine 284, cysteine 325–cysteine 334, cysteine 364–cysteine 378, cysteine 406–cysteine 413, and cysteine 440–cysteine 455. A helical transmembrane segment spans residues 465 to 485 (WVLVWLACLLLAAALFFFLLL). At 486–698 (KKDRRKAARG…WDLGPCTTLE (213 aa)) the chain is on the cytoplasmic side. The SEFIR domain occupies 496–645 (SRTALLLHSA…LPSQLPAFLD (150 aa)).

In terms of assembly, homodimer; disulfide-linked. Heterodimer with IL17RA. Heterodimerization with IL17RA is independent of the cytoplasmic tail. Associates with non-glycosylated IL17RA constitutively. Binding of IL17A and IL17F induces association with glycosylated IL17RA. Forms complexes with 2:1 binding stoichiometry: two receptor chains for one interleukin molecule. IL17A homodimer preferentially drives the formation of IL17RA-IL17RC heterodimeric receptor complex, whereas IL17F homodimer forms predominantly complexes with IL17RC homodimer. IL17A-IL17F forms complexes with IL17RA-IL17RC, but with lower affinity when compared to IL17A homodimer. IL17RC chain cannot distinguish between IL17A and IL17F molecules, potentially enabling the formation of topologically distinct complexes. Interacts (through SEFIR domain and extended downstream region) with TRAF3IP2/ACT1 (phosphorylated). As to expression, highly expressed in colonic epithelial cells. Expressed in lung epithelial cells. Expressed in macrophages. Highly expressed in B-1a B cells and at a lower extent in B-1b and B-2 B cells (at protein level).

The protein resides in the cell membrane. Its function is as follows. Receptor for IL17A and IL17F, major effector cytokines of innate and adaptive immune system involved in antimicrobial host defense and maintenance of tissue integrity. Receptor for IL17A and IL17F homodimers as part of a heterodimeric complex with IL17RA. Receptor for the heterodimer formed by IL17A and IL17B as part of a heterodimeric complex with IL17RA. Has also been shown to be the cognate receptor for IL17F and to bind IL17A with high affinity without the need for IL17RA. Upon binding of IL17F homodimer triggers downstream activation of TRAF6 and NF-kappa-B signaling pathway. Induces transcriptional activation of IL33, a potent cytokine that stimulates group 2 innate lymphoid cells and adaptive T-helper 2 cells involved in pulmonary allergic response to fungi. Promotes sympathetic innervation of peripheral organs by coordinating the communication between gamma-delta T cells and parenchymal cells. Stimulates sympathetic innervation of thermogenic adipose tissue by driving TGFB1 expression. Binding of IL17A-IL17F to IL17RA-IL17RC heterodimeric receptor complex triggers homotypic interaction of IL17RA and IL17RC chains with TRAF3IP2 adapter through SEFIR domains. This leads to downstream TRAF6-mediated activation of NF-kappa-B and MAPkinase pathways ultimately resulting in transcriptional activation of cytokines, chemokines, antimicrobial peptides and matrix metalloproteinases, with potential strong immune inflammation. Primarily induces neutrophil activation and recruitment at infection and inflammatory sites. Stimulates the production of antimicrobial beta-defensins DEFB1, DEFB103A, and DEFB104A by mucosal epithelial cells, limiting the entry of microbes through the epithelial barriers. This is Interleukin-17 receptor C (Il17rc) from Mus musculus (Mouse).